Here is a 132-residue protein sequence, read N- to C-terminus: NADH-quinone oxidoreductase subunit A (132 aa).

Transmembrane regions (helical) follow at residues 14 to 34 (FFTFFFIAVSICVFMLSISWI), 66 to 86 (FYLVAIYFVLFDVEALYLYAW), and 96 to 116 (IGFIEALIFILFLLSGLIYLI).

The protein belongs to the complex I subunit 3 family. As to quaternary structure, NDH-1 is composed of 13 different subunits. Subunits NuoA, H, J, K, L, M, N constitute the membrane sector of the complex.

The protein resides in the cell membrane. The catalysed reaction is a quinone + NADH + 5 H(+)(in) = a quinol + NAD(+) + 4 H(+)(out). Functionally, NDH-1 shuttles electrons from NADH, via FMN and iron-sulfur (Fe-S) centers, to quinones in the respiratory chain. The immediate electron acceptor for the enzyme in this species is believed to be ubiquinone. Couples the redox reaction to proton translocation (for every two electrons transferred, four hydrogen ions are translocated across the cytoplasmic membrane), and thus conserves the redox energy in a proton gradient. The protein is NADH-quinone oxidoreductase subunit A of Buchnera aphidicola subsp. Baizongia pistaciae (strain Bp).